The following is a 179-amino-acid chain: Acireductone dioxygenase (179 aa).

Residues 1–23 (MVQAWYMDESTADPRMPHRAQPD) form a disordered region. Histidine 88, histidine 90, glutamate 94, and histidine 133 together coordinate Fe(2+). Residues histidine 88, histidine 90, glutamate 94, and histidine 133 each contribute to the Ni(2+) site.

It belongs to the acireductone dioxygenase (ARD) family. As to quaternary structure, monomer. Interacts with MMP14. Fe(2+) serves as cofactor. Requires Ni(2+) as cofactor. As to expression, detected in prostate, liver, heart, brain, muscle, kidney and seminal vesicles.

The protein localises to the cytoplasm. Its subcellular location is the nucleus. It localises to the cell membrane. The catalysed reaction is 1,2-dihydroxy-5-(methylsulfanyl)pent-1-en-3-one + O2 = 4-methylsulfanyl-2-oxobutanoate + formate + 2 H(+). It catalyses the reaction 1,2-dihydroxy-5-(methylsulfanyl)pent-1-en-3-one + O2 = 3-(methylsulfanyl)propanoate + CO + formate + 2 H(+). Its pathway is amino-acid biosynthesis; L-methionine biosynthesis via salvage pathway; L-methionine from S-methyl-5-thio-alpha-D-ribose 1-phosphate: step 5/6. Functionally, catalyzes 2 different reactions between oxygen and the acireductone 1,2-dihydroxy-3-keto-5-methylthiopentene (DHK-MTPene) depending upon the metal bound in the active site. Fe-containing acireductone dioxygenase (Fe-ARD) produces formate and 2-keto-4-methylthiobutyrate (KMTB), the alpha-ketoacid precursor of methionine in the methionine recycle pathway. Ni-containing acireductone dioxygenase (Ni-ARD) produces methylthiopropionate, carbon monoxide and formate, and does not lie on the methionine recycle pathway. Also down-regulates cell migration mediated by MMP14. This Rattus norvegicus (Rat) protein is Acireductone dioxygenase (Adi1).